Here is a 629-residue protein sequence, read N- to C-terminus: tRNA uridine 5-carboxymethylaminomethyl modification enzyme MnmG (629 aa).

FAD contacts are provided by residues 13 to 18, Val125, and Ser180; that span reads GGGHAG. 273–287 lines the NAD(+) pocket; sequence GPRYCPSIEDKVMRF. Residue Gln370 participates in FAD binding.

Belongs to the MnmG family. In terms of assembly, homodimer. Heterotetramer of two MnmE and two MnmG subunits. The cofactor is FAD.

Its subcellular location is the cytoplasm. In terms of biological role, NAD-binding protein involved in the addition of a carboxymethylaminomethyl (cmnm) group at the wobble position (U34) of certain tRNAs, forming tRNA-cmnm(5)s(2)U34. In Salmonella schwarzengrund (strain CVM19633), this protein is tRNA uridine 5-carboxymethylaminomethyl modification enzyme MnmG.